Here is a 464-residue protein sequence, read N- to C-terminus: Argininosuccinate lyase (464 aa).

It belongs to the lyase 1 family. Argininosuccinate lyase subfamily.

It localises to the cytoplasm. The catalysed reaction is 2-(N(omega)-L-arginino)succinate = fumarate + L-arginine. It functions in the pathway amino-acid biosynthesis; L-arginine biosynthesis; L-arginine from L-ornithine and carbamoyl phosphate: step 3/3. This chain is Argininosuccinate lyase, found in Streptococcus suis (strain 98HAH33).